Consider the following 892-residue polypeptide: Leucine--tRNA ligase (892 aa).

The 'HIGH' region motif lies at 42-52; that stretch reads PYPSGKLHMGH. The 'KMSKS' region motif lies at 640 to 644; it reads TMSKS. Lysine 643 contacts ATP.

It belongs to the class-I aminoacyl-tRNA synthetase family.

It localises to the cytoplasm. It catalyses the reaction tRNA(Leu) + L-leucine + ATP = L-leucyl-tRNA(Leu) + AMP + diphosphate. This is Leucine--tRNA ligase from Albidiferax ferrireducens (strain ATCC BAA-621 / DSM 15236 / T118) (Rhodoferax ferrireducens).